Reading from the N-terminus, the 92-residue chain is Transcription factor PRE1 (92 aa).

The region spanning 4 to 59 (RRSRQSSSAPRISDNQMIDLVSKLRQILPEIGQRRRSDKASASKVLQETCNYIRNL) is the bHLH domain.

In terms of assembly, interacts with IBH1 and HFR1. Expressed in roots, leaves, stems and flowers.

Its subcellular location is the nucleus. Its function is as follows. Atypical and probable non DNA-binding bHLH transcription factor that integrates multiple signaling pathways to regulate cell elongation and plant development. Binds IBH1, forming a pair of antagonistic bHLH transcription factors that function downstream of BZR1 to mediate brassinosteroid regulation of cell elongation. Regulates light responses by binding and inhibiting the activity of the bHLH transcription factor HFR1, a critical regulator of light signaling and shade avoidance. May have a regulatory role in various aspects of gibberellin-dependent growth and development. The polypeptide is Transcription factor PRE1 (PRE1) (Arabidopsis thaliana (Mouse-ear cress)).